The following is a 3746-amino-acid chain: N-(5-amino-5-carboxypentanoyl)-L-cysteinyl-D-valine synthase (3746 aa).

The interval 299–711 (EEVVERHEDK…GRADFQIKLR (413 aa)) is adenylation (A) domain 1. The Carrier 1 domain occupies 818-895 (DLRGDTEIAL…RMADLLQNKQ (78 aa)). S855 is modified (O-(pantetheine 4'-phosphoryl)serine). The tract at residues 918–1372 (NIYLANSLQQ…YLSSIQLEQL (455 aa)) is condensation (C) domain 1. The tract at residues 1391–1801 (FENEASQKPD…GRNDFQVKIR (411 aa)) is adenylation (A) domain 2. The 78-residue stretch at 1902 to 1979 (PPRSEIERSL…AQTHLILNDA (78 aa)) folds into the Carrier 2 domain. At S1939 the chain carries O-(pantetheine 4'-phosphoryl)serine. The interval 1994–2434 (QMIPVSRAQE…SELSAEGINE (441 aa)) is condensation (C) domain 2. The segment at 2478–2883 (AFLAAEKIAV…GRGDLQIKMR (406 aa)) is adenylation (A) domain 3. The region spanning 2991–3066 (PPRNIIEAKM…ALHDHVFMKD (76 aa)) is the Carrier 3 domain. Residue S3026 is modified to O-(pantetheine 4'-phosphoryl)serine. Residues 3084 to 3500 (GEAPLLPIQD…NKILDGRASQ (417 aa)) form an epimerase (E) domain region. The segment at 3530-3732 (TLFLLPPGEG…FSWVGNPQQV (203 aa)) is thioesterase (TE) domain.

The protein belongs to the NRP synthetase family. The cofactor is pantetheine 4'-phosphate. Mg(2+) is required as a cofactor.

It localises to the cytoplasm. The protein resides in the cytosol. Its subcellular location is the vacuole membrane. It carries out the reaction L-2-aminoadipate + L-valine + L-cysteine + 3 ATP + H2O = N-[(5S)-5-amino-5-carboxypentanoyl]-L-cysteinyl-D-valine + 3 AMP + 3 diphosphate + 3 H(+). Its pathway is antibiotic biosynthesis; penicillin G biosynthesis; penicillin G from L-alpha-aminoadipate and L-cysteine and L-valine: step 1/3. Nonribosomal peptide synthetase; part of the gene cluster that mediates the biosynthesis of penicillin, the world's most important antibiotic. The trimodular NRPS acvA produces the tripeptide N-[(5S)-5-amino-5-carboxypentanoyl]-L-cysteinyl-D-valine (LLD-ACV or ACV) via condensation of the 3 residues L-2-aminoadipate, L-cysteine and L-valine. The precursor amino acids for penicillin biosynthesis are withdrawn from the vacuolar amino acid pool by the MFS-type transporter penV. Each of the constituent amino acids of the tripeptide ACV are activated as aminoacyl-adenylates with peptide bonds formed through the participation of amino acid thioester intermediates. The penicillin biosynthesis occurs via 3 enzymatic steps, the first corresponding to the production of the tripeptide N-[(5S)-5-amino-5-carboxypentanoyl]-L-cysteinyl-D-valine (LLD-ACV or ACV) by the NRPS acvA. The tripeptide ACV is then cyclized to isopenicillin N (IPN) by the isopenicillin N synthase ipnA that forms the beta-lactam nucleus. Finally, the alpha-aminoadipyl side chain is exchanged for phenylacetic acid by the isopenicillin N acyltransferase aatA to yield penicillin in the peroxisomal matrix. This Penicillium chrysogenum (Penicillium notatum) protein is N-(5-amino-5-carboxypentanoyl)-L-cysteinyl-D-valine synthase.